A 180-amino-acid polypeptide reads, in one-letter code: ATP-dependent protease subunit HslV (180 aa).

T8 is an active-site residue. Na(+) contacts are provided by A165, C168, and T171.

This sequence belongs to the peptidase T1B family. HslV subfamily. A double ring-shaped homohexamer of HslV is capped on each side by a ring-shaped HslU homohexamer. The assembly of the HslU/HslV complex is dependent on binding of ATP.

The protein localises to the cytoplasm. It catalyses the reaction ATP-dependent cleavage of peptide bonds with broad specificity.. With respect to regulation, allosterically activated by HslU binding. In terms of biological role, protease subunit of a proteasome-like degradation complex believed to be a general protein degrading machinery. The polypeptide is ATP-dependent protease subunit HslV (Macrococcus caseolyticus (strain JCSC5402) (Macrococcoides caseolyticum)).